A 206-amino-acid chain; its full sequence is Large ribosomal subunit protein uL4 (206 aa).

Belongs to the universal ribosomal protein uL4 family. Part of the 50S ribosomal subunit.

Its function is as follows. One of the primary rRNA binding proteins, this protein initially binds near the 5'-end of the 23S rRNA. It is important during the early stages of 50S assembly. It makes multiple contacts with different domains of the 23S rRNA in the assembled 50S subunit and ribosome. Functionally, forms part of the polypeptide exit tunnel. This Afipia carboxidovorans (strain ATCC 49405 / DSM 1227 / KCTC 32145 / OM5) (Oligotropha carboxidovorans) protein is Large ribosomal subunit protein uL4.